A 414-amino-acid chain; its full sequence is Tryptophan synthase beta chain (414 aa).

Residues 1–12 show a composition bias toward basic and acidic residues; sequence MVSTISRHDQNK. Residues 1 to 23 form a disordered region; sequence MVSTISRHDQNKNNDYLNQPSKE. N6-(pyridoxal phosphate)lysine is present on K109.

This sequence belongs to the TrpB family. Tetramer of two alpha and two beta chains. Requires pyridoxal 5'-phosphate as cofactor.

The catalysed reaction is (1S,2R)-1-C-(indol-3-yl)glycerol 3-phosphate + L-serine = D-glyceraldehyde 3-phosphate + L-tryptophan + H2O. The protein operates within amino-acid biosynthesis; L-tryptophan biosynthesis; L-tryptophan from chorismate: step 5/5. The beta subunit is responsible for the synthesis of L-tryptophan from indole and L-serine. This is Tryptophan synthase beta chain from Prochlorococcus marinus (strain MIT 9515).